The primary structure comprises 528 residues: GMP synthase [glutamine-hydrolyzing] (528 aa).

The Glutamine amidotransferase type-1 domain occupies 3 to 199 (KVAIIDFGSQ…FLDIAGCQKD (197 aa)). The Nucleophile role is filled by cysteine 83. Active-site residues include histidine 174 and glutamate 176. In terms of domain architecture, GMPS ATP-PPase spans 200–394 (WTVTSFIDDQ…LGISTEILMR (195 aa)). 227 to 233 (SGGVDSS) serves as a coordination point for ATP.

Homodimer.

The enzyme catalyses XMP + L-glutamine + ATP + H2O = GMP + L-glutamate + AMP + diphosphate + 2 H(+). Its pathway is purine metabolism; GMP biosynthesis; GMP from XMP (L-Gln route): step 1/1. Its function is as follows. Catalyzes the synthesis of GMP from XMP. The chain is GMP synthase [glutamine-hydrolyzing] from Ehrlichia ruminantium (strain Gardel).